Reading from the N-terminus, the 131-residue chain is Holo-[acyl-carrier-protein] synthase (131 aa).

Positions 8 and 59 each coordinate Mg(2+).

It belongs to the P-Pant transferase superfamily. AcpS family. Mg(2+) serves as cofactor.

The protein resides in the cytoplasm. It catalyses the reaction apo-[ACP] + CoA = holo-[ACP] + adenosine 3',5'-bisphosphate + H(+). Its function is as follows. Transfers the 4'-phosphopantetheine moiety from coenzyme A to a Ser of acyl-carrier-protein. The chain is Holo-[acyl-carrier-protein] synthase from Rickettsia massiliae (strain Mtu5).